The primary structure comprises 126 residues: H2B.U histone 2 (126 aa).

Positions 1–35 (MPEPSRSTPAPKKGSKKAITKAQKKDGKKRKRGRK) are disordered. Pro2 is subject to N-acetylproline. Glu3 bears the ADP-ribosyl glutamic acid mark. Residue Ser7 is modified to ADP-ribosylserine. N6-(beta-hydroxybutyryl)lysine; alternate is present on Lys12. N6-acetyllysine; alternate is present on residues Lys12 and Lys13. An N6-crotonyllysine; alternate mark is found at Lys12 and Lys13. Lys12 carries the post-translational modification N6-lactoyllysine; alternate. Residue Lys13 is modified to N6-(2-hydroxyisobutyryl)lysine; alternate. A Phosphoserine; by STK4/MST1 modification is found at Ser15. N6-acetyllysine; alternate occurs at positions 16, 17, 21, and 24. Lys16, Lys17, Lys21, and Lys24 each carry N6-crotonyllysine; alternate. 4 positions are modified to N6-lactoyllysine; alternate: Lys16, Lys17, Lys21, and Lys24. Position 17 is an N6-glutaryllysine; alternate (Lys17). The residue at position 21 (Lys21) is an N6-(beta-hydroxybutyryl)lysine; alternate. N6-(2-hydroxyisobutyryl)lysine; alternate is present on residues Lys21 and Lys24. Lys21 bears the N6-butyryllysine; alternate mark. Residue Lys21 forms a Glycyl lysine isopeptide (Lys-Gly) (interchain with G-Cter in SUMO2); alternate linkage. Residue Lys25 is modified to N6-(2-hydroxyisobutyryl)lysine. Lys35 carries the post-translational modification N6-(beta-hydroxybutyryl)lysine; alternate. Lys35 is subject to N6-crotonyllysine; alternate. Lys35 carries the post-translational modification N6-(2-hydroxyisobutyryl)lysine; alternate. Lys35 carries the post-translational modification N6-glutaryllysine; alternate. At Lys35 the chain carries N6-succinyllysine; alternate. Residue Lys35 forms a Glycyl lysine isopeptide (Lys-Gly) (interchain with G-Cter in ubiquitin); alternate linkage. At Glu36 the chain carries PolyADP-ribosyl glutamic acid. A Phosphoserine; by AMPK modification is found at Ser37. At Lys44 the chain carries N6-lactoyllysine; alternate. Residues Lys44, Lys47, and Lys58 each carry the N6-(2-hydroxyisobutyryl)lysine; alternate modification. Residues Lys44 and Lys47 each carry the N6-glutaryllysine; alternate modification. Lys47 is modified (N6-methyllysine; alternate). An N6,N6-dimethyllysine; alternate modification is found at Lys58. Arg80 carries the post-translational modification Dimethylated arginine. Lys86 carries the post-translational modification N6-acetyllysine; alternate. An N6-lactoyllysine; alternate modification is found at Lys86. Lys86 carries the N6-(2-hydroxyisobutyryl)lysine; alternate modification. An N6,N6,N6-trimethyllysine; alternate modification is found at Lys86. Omega-N-methylarginine is present on residues Arg87 and Arg93. Lys109 bears the N6-(beta-hydroxybutyryl)lysine; alternate mark. Lys109 carries the post-translational modification N6-lactoyllysine; alternate. An N6-(2-hydroxyisobutyryl)lysine; alternate modification is found at Lys109. Lys109 bears the N6-glutaryllysine; alternate mark. Residue Lys109 is modified to N6-methyllysine; alternate. An O-linked (GlcNAc) serine glycan is attached at Ser113. Thr116 carries the phosphothreonine modification. Lys117 carries the N6-(beta-hydroxybutyryl)lysine; alternate modification. Lys117 and Lys121 each carry N6-lactoyllysine; alternate. An N6-(2-hydroxyisobutyryl)lysine; alternate mark is found at Lys117 and Lys121. N6-glutaryllysine; alternate is present on residues Lys117 and Lys121. Lys117 and Lys121 each carry N6-succinyllysine; alternate. Lys117 bears the N6-methylated lysine; alternate mark. Lys121 is covalently cross-linked (Glycyl lysine isopeptide (Lys-Gly) (interchain with G-Cter in ubiquitin); alternate).

It belongs to the histone H2B family. In terms of assembly, the nucleosome is a histone octamer containing two molecules each of H2A, H2B, H3 and H4 assembled in one H3-H4 heterotetramer and two H2A-H2B heterodimers. The octamer wraps approximately 147 bp of DNA. Post-translationally, monoubiquitination at Lys-35 (H2BK34Ub) by the MSL1/MSL2 dimer is required for histone H3 'Lys-4' (H3K4me) and 'Lys-79' (H3K79me) methylation and transcription activation at specific gene loci, such as HOXA9 and MEIS1 loci. Similarly, monoubiquitination at Lys-121 (H2BK120Ub) by the RNF20/40 complex gives a specific tag for epigenetic transcriptional activation and is also prerequisite for histone H3 'Lys-4' and 'Lys-79' methylation. It also functions cooperatively with the FACT dimer to stimulate elongation by RNA polymerase II. H2BK120Ub also acts as a regulator of mRNA splicing: deubiquitination by USP49 is required for efficient cotranscriptional splicing of a large set of exons. Phosphorylated on Ser-15 (H2BS14ph) by STK4/MST1 during apoptosis; which facilitates apoptotic chromatin condensation. Also phosphorylated on Ser-15 in response to DNA double strand breaks (DSBs), and in correlation with somatic hypermutation and immunoglobulin class-switch recombination. Phosphorylation at Ser-37 (H2BS36ph) by AMPK in response to stress promotes transcription. In terms of processing, glcNAcylation at Ser-113 promotes monoubiquitination of Lys-121. It fluctuates in response to extracellular glucose, and associates with transcribed genes. Post-translationally, ADP-ribosylated by PARP1 or PARP2 on Ser-7 (H2BS6ADPr) in response to DNA damage. H2BS6ADPr promotes recruitment of CHD1L. Mono-ADP-ribosylated on Glu-3 (H2BE2ADPr) by PARP3 in response to single-strand breaks. Poly ADP-ribosylation on Glu-36 (H2BE35ADPr) by PARP1 regulates adipogenesis: it inhibits phosphorylation at Ser-37 (H2BS36ph), thereby blocking expression of pro-adipogenetic genes. Crotonylation (Kcr) is specifically present in male germ cells and marks testis-specific genes in post-meiotic cells, including X-linked genes that escape sex chromosome inactivation in haploid cells. Crotonylation marks active promoters and enhancers and confers resistance to transcriptional repressors. It is also associated with post-meiotically activated genes on autosomes. In terms of processing, hydroxybutyrylation of histones is induced by starvation. Post-translationally, lactylated in macrophages by EP300/P300 by using lactoyl-CoA directly derived from endogenous or exogenous lactate, leading to stimulates gene transcription.

It is found in the nucleus. The protein resides in the chromosome. Core component of nucleosome. Nucleosomes wrap and compact DNA into chromatin, limiting DNA accessibility to the cellular machineries which require DNA as a template. Histones thereby play a central role in transcription regulation, DNA repair, DNA replication and chromosomal stability. DNA accessibility is regulated via a complex set of post-translational modifications of histones, also called histone code, and nucleosome remodeling. The polypeptide is H2B.U histone 2 (Mus musculus (Mouse)).